Reading from the N-terminus, the 344-residue chain is Protein-glutamate methylesterase/protein-glutamine glutaminase 1 (344 aa).

Positions 5-122 constitute a Response regulatory domain; it reads RVLVVDDSAT…GTQEALAEIV (118 aa). D56 bears the 4-aspartylphosphate mark. A CheB-type methylesterase domain is found at 151-343; it reads FMPSGDIVAI…QSILDLASAR (193 aa). Residues S163, H189, and D285 contribute to the active site.

This sequence belongs to the CheB family. Phosphorylated by CheA. Phosphorylation of the N-terminal regulatory domain activates the methylesterase activity.

The protein resides in the cytoplasm. It catalyses the reaction [protein]-L-glutamate 5-O-methyl ester + H2O = L-glutamyl-[protein] + methanol + H(+). The catalysed reaction is L-glutaminyl-[protein] + H2O = L-glutamyl-[protein] + NH4(+). Involved in chemotaxis. Part of a chemotaxis signal transduction system that modulates chemotaxis in response to various stimuli. Catalyzes the demethylation of specific methylglutamate residues introduced into the chemoreceptors (methyl-accepting chemotaxis proteins or MCP) by CheR. Also mediates the irreversible deamidation of specific glutamine residues to glutamic acid. The protein is Protein-glutamate methylesterase/protein-glutamine glutaminase 1 of Caulobacter vibrioides (strain ATCC 19089 / CIP 103742 / CB 15) (Caulobacter crescentus).